A 625-amino-acid chain; its full sequence is Protein arginine N-methyltransferase skb1 (625 aa).

Positions 280–588 constitute an SAM-dependent MTase PRMT-type domain; that stretch reads LQVPLQPLSY…WRLTDGMRVW (309 aa). S-adenosyl-L-methionine is bound by residues Y296, 305–306, E359, and 386–387; these read KY and DM. Residues E402 and E411 each act as proton donor/acceptor in the active site.

Belongs to the class I-like SAM-binding methyltransferase superfamily. Protein arginine N-methyltransferase family. As to quaternary structure, interacts with the N-terminal regulatory domain of shk1. Shk1, cdc42 and skb1 are able to form a ternary complex in vivo. Interacts with orb6. Interacts with Cdr1 and the Cdr1 inhibitory target Wee1.

It localises to the nucleus. Its subcellular location is the cell tip. It is found in the cell septum. The protein resides in the cytoplasm. The protein localises to the cell cortex. In terms of biological role, S-adenosyl-L-methionine-dependent protein-arginine N-methyltransferase that can catalyze both the mono- and symmetric (type II) dimethylation of the guanidino nitrogens of arginine residues in target proteins. Delays mitotic entry by inhibiting the Cdr1-Wee1 signaling pathway. Cortical nodes sequester Skb1 from its regulatory targets Cdr1 and Wee1. Positively modulates the shk1 kinase function. May be a mediator of hyperosmotic stress response. Involved in the control of cell polarity by regulating the subcellular localization of Orb6 kinase. In Schizosaccharomyces pombe (strain 972 / ATCC 24843) (Fission yeast), this protein is Protein arginine N-methyltransferase skb1.